We begin with the raw amino-acid sequence, 118 residues long: NADPH-dependent 7-cyano-7-deazaguanine reductase (118 aa).

Cys31 acts as the Thioimide intermediate in catalysis. Asp38 functions as the Proton donor in the catalytic mechanism. Residues 53–55 (VEL) and 72–73 (YE) each bind substrate.

It belongs to the GTP cyclohydrolase I family. QueF type 1 subfamily.

The protein resides in the cytoplasm. The catalysed reaction is 7-aminomethyl-7-carbaguanine + 2 NADP(+) = 7-cyano-7-deazaguanine + 2 NADPH + 3 H(+). It participates in tRNA modification; tRNA-queuosine biosynthesis. Catalyzes the NADPH-dependent reduction of 7-cyano-7-deazaguanine (preQ0) to 7-aminomethyl-7-deazaguanine (preQ1). The protein is NADPH-dependent 7-cyano-7-deazaguanine reductase of Chlorobium phaeobacteroides (strain BS1).